We begin with the raw amino-acid sequence, 397 residues long: Izumo sperm-egg fusion protein 1 (397 aa).

The N-terminal stretch at 1–21 (MGPHFTLLLAALANCLCPGRP) is a signal peptide. 5 disulfide bridges follow: C22–C149, C25–C152, C135–C159, C139–C165, and C182–C233. Residues 22–319 (CIKCDQFVTD…QNPEKKMKTR (298 aa)) lie on the Extracellular side of the membrane. Residues 148 to 160 (WCLKCEKQLHICR) are important for interaction with IZUMO1R. Residues 167 to 251 (ERHIEVHRSE…HATVIRYDVT (85 aa)) enclose the Ig-like C2-type domain. N204 is a glycosylation site (N-linked (GlcNAc...) asparagine). Residues 271 to 292 (EHETPVHVTPQTPPGQEPESEL) are disordered. The helical transmembrane segment at 320–340 (LLILLTLGFVVLVASIIISVL) threads the bilayer. At 341-397 (HFRKVSAKLKNASDEVKPTASGSKSDQSLSQQMGLKKASQADFNSDYSGDKSEATEN) the chain is on the cytoplasmic side. The tract at residues 351-397 (NASDEVKPTASGSKSDQSLSQQMGLKKASQADFNSDYSGDKSEATEN) is disordered. A compositionally biased stretch (polar residues) spans 360–373 (ASGSKSDQSLSQQM). S379 is subject to Phosphoserine. The segment covering 388 to 397 (SGDKSEATEN) has biased composition (basic and acidic residues).

It belongs to the Izumo family. Monomer, homodimer; disulfide-linked and homooligomer; depending on the context. Interacts with IZUMO1R/JUNO. IZUMO1 and IZUMO1R/JUNO form a complex with 1:1 stoichiometry. In gamete recognition, IZUMO1R/JUNO first binds to monomeric IZUMO1. The weak, but specific interaction with IZUMO1R/JUNO induces IZUMO1 homodimerization. The process follows a tight binding phase where IZUMO1 bends the entire structure towards the sperm membrane side through a thiol-disulfide exchange reaction. The molecule no longer binds to IZUMO1R/JUNO and instead binds to a putative second oocyte receptor. Interacts with ACE3. Part of a oolemmal binding multimeric complex (IZUMO1 complex) composed at least of IZUMO1 and GLIPR1L1; the complex assemblage is influenced by the maturation status of the male germ cell. Interacts with GLIPR1L1. Interacts with FREY; the interaction retains IZUMO1 at the endoplasmic reticulum membrane and coordinates IZUMO1 complex assembly. Interacts with WDR54. Forms a complex with SPACA6 and TMEM81 on spermatocyte cell membrane. Post-translationally, N-glycosylated. Glycosylation is not essential for fusion and for proper protein trafficking in sperm. In terms of processing, phosphorylated. The cytoplasmic C-terminus is phosphorylated and undergoes phosphorylation changes during epididymal transit. In terms of tissue distribution, sperm-specific (at protein level). Detectable on sperm surface only after the acrosome reaction. Expressed in spermatozoa, more abundantly expressed in the head than the tail (at protein level).

It is found in the cell membrane. Its subcellular location is the cytoplasmic vesicle. The protein resides in the secretory vesicle. The protein localises to the acrosome membrane. Functionally, essential sperm cell-surface protein required for fertilization by acting as a ligand for IZUMO1R/JUNO receptor on egg. The IZUMO1:IZUMO1R/JUNO interaction is a necessary adhesion event between sperm and egg that is required for fertilization but is not sufficient for cell fusion. The ligand-receptor interaction probably does not act as a membrane 'fusogen'. Plays a critical role in sperm-oolemma binding prior to plasma membrane fusion. Can mediate cell-cell fusion in cultured mammalian cells independently of its binding to IZUMO1R/JUNO. This Mus musculus (Mouse) protein is Izumo sperm-egg fusion protein 1.